The following is a 247-amino-acid chain: Caffeoyl-CoA O-methyltransferase 1 (247 aa).

Lys-21 is a substrate binding site. Residues Thr-63, Glu-85, 87–88 (GV), Ser-93, Asp-111, and Ala-140 each bind S-adenosyl-L-methionine. Asp-163 lines the substrate pocket. Residue Asp-163 coordinates a divalent metal cation. Asp-165 serves as a coordination point for S-adenosyl-L-methionine. Residues Asp-189 and Asn-190 each coordinate a divalent metal cation. Position 194 (Asn-194) interacts with substrate.

The protein belongs to the class I-like SAM-binding methyltransferase superfamily. Cation-dependent O-methyltransferase family. CCoAMT subfamily. A divalent metal cation is required as a cofactor.

It carries out the reaction (E)-caffeoyl-CoA + S-adenosyl-L-methionine = (E)-feruloyl-CoA + S-adenosyl-L-homocysteine + H(+). Its pathway is aromatic compound metabolism; phenylpropanoid biosynthesis. Functionally, methylates caffeoyl-CoA to feruloyl-CoA and 5-hydroxyferuloyl-CoA to sinapoyl-CoA. Plays a role in the synthesis of feruloylated polysaccharides. Involved in the reinforcement of the plant cell wall. Also involved in the responding to wounding or pathogen challenge by the increased formation of cell wall-bound ferulic acid polymers. The sequence is that of Caffeoyl-CoA O-methyltransferase 1 (CCOAOMT1) from Populus trichocarpa (Western balsam poplar).